The chain runs to 287 residues: Large ribosomal subunit protein uL3 (287 aa).

Residues 228–287 (KAPEAKPAKLSKKKQAKELAKAQAANQQTVEAKVDTPVVEPKPTEVKKAAPVVEKKGEDK) are disordered. A compositionally biased stretch (basic and acidic residues) spans 269-287 (KPTEVKKAAPVVEKKGEDK).

It belongs to the universal ribosomal protein uL3 family. In terms of assembly, part of the 50S ribosomal subunit. Forms a cluster with proteins L14 and L19.

Its function is as follows. One of the primary rRNA binding proteins, it binds directly near the 3'-end of the 23S rRNA, where it nucleates assembly of the 50S subunit. The chain is Large ribosomal subunit protein uL3 from Mycoplasma pneumoniae (strain ATCC 29342 / M129 / Subtype 1) (Mycoplasmoides pneumoniae).